The sequence spans 111 residues: Cell division protein FtsB (111 aa).

The Cytoplasmic portion of the chain corresponds to 1–3; sequence MRL. Residues 4 to 21 form a helical membrane-spanning segment; the sequence is ITLFLLLLLLAIQYPLWL. Topologically, residues 22–111 are periplasmic; that stretch reads GKGGWLRVWD…PAALQPNHRH (90 aa). Positions 28–64 form a coiled coil; sequence RVWDMQKQVASQNQRNAELKQRNLKLEGEVKDLKEGT. The segment at 90–111 is disordered; it reads PAPKTSETPLPPPAALQPNHRH.

Belongs to the FtsB family. Part of a complex composed of FtsB, FtsL and FtsQ.

The protein localises to the cell inner membrane. In terms of biological role, essential cell division protein. May link together the upstream cell division proteins, which are predominantly cytoplasmic, with the downstream cell division proteins, which are predominantly periplasmic. This Ralstonia nicotianae (strain ATCC BAA-1114 / GMI1000) (Ralstonia solanacearum) protein is Cell division protein FtsB.